The sequence spans 154 residues: Aspartate carbamoyltransferase regulatory chain (154 aa).

Zn(2+) contacts are provided by C109, C114, C138, and C141.

The protein belongs to the PyrI family. In terms of assembly, contains catalytic and regulatory chains. Zn(2+) serves as cofactor.

In terms of biological role, involved in allosteric regulation of aspartate carbamoyltransferase. This is Aspartate carbamoyltransferase regulatory chain from Methanothrix thermoacetophila (strain DSM 6194 / JCM 14653 / NBRC 101360 / PT) (Methanosaeta thermophila).